Reading from the N-terminus, the 169-residue chain is Cell division inhibitor SulA (169 aa).

Positions 106 to 112 (ALRTGNY) are ftsZ binding. A lon protease binding region spans residues 162–169 (KIHSNLYH).

Belongs to the SulA family. In terms of assembly, interacts with FtsZ. Post-translationally, is rapidly cleaved and degraded by the Lon protease once DNA damage is repaired.

Functionally, component of the SOS system and an inhibitor of cell division. Accumulation of SulA causes rapid cessation of cell division and the appearance of long, non-septate filaments. In the presence of GTP, binds a polymerization-competent form of FtsZ in a 1:1 ratio, thus inhibiting FtsZ polymerization and therefore preventing it from participating in the assembly of the Z ring. This mechanism prevents the premature segregation of damaged DNA to daughter cells during cell division. The chain is Cell division inhibitor SulA from Escherichia coli O7:K1 (strain IAI39 / ExPEC).